A 485-amino-acid chain; its full sequence is WAS/WASL-interacting protein family member 3 (485 aa).

Residues M1 to P41 show a composition bias toward pro residues. The segment at M1–R485 is disordered. Short sequence motifs (profilin-binding motif) lie at residues V3–P8, P11–P16, and A31–P36. Residues G56–V73 enclose the WH2 domain. R57 is subject to Asymmetric dimethylarginine. The short motif at R69–K72 is the RLRK element. Residue S161 is modified to Phosphoserine. Positions P176–S203 are enriched in pro residues. S211 carries the phosphoserine modification. The span at P212–P246 shows a compositional bias: pro residues. The span at A247–L262 shows a compositional bias: low complexity. Pro residues-rich tracts occupy residues H263–G278 and P296–P312. S392 is subject to Phosphoserine. Polar residues predominate over residues S392–G405. The span at A415–P439 shows a compositional bias: basic and acidic residues. The WASP-binding motif signature appears at T424 to V448.

In terms of assembly, interacts with WASL, and monomeric and filamentous actin. As to expression, isoform 1 is expressed in brain and testis and isoform 2 is expressed only in brain (at protein level).

The protein localises to the cytoplasm. May be a regulator of cytoskeletal organization (Potential). May have a role in spermatogenesis. This is WAS/WASL-interacting protein family member 3 (Wipf3) from Mus musculus (Mouse).